The chain runs to 107 residues: Thioredoxin (107 aa).

In terms of domain architecture, Thioredoxin spans 2–107; sequence SVSQVTDASF…LASTLNKYIS (106 aa). Catalysis depends on nucleophile residues C31 and C34. C31 and C34 form a disulfide bridge.

Belongs to the thioredoxin family.

The protein resides in the plastid. It is found in the chloroplast. Functionally, participates in various redox reactions through the reversible oxidation of its active center dithiol to a disulfide and catalyzes dithiol-disulfide exchange reactions. This Pyropia yezoensis (Susabi-nori) protein is Thioredoxin (trxA).